The following is a 50-amino-acid chain: F420-non-reducing hydrogenase vhu subunit U (50 aa).

Residues selenocysteine 27 and cysteine 30 each coordinate Ni(2+). Selenocysteine 27 is a non-standard amino acid (selenocysteine). A propeptide spans 34–50 (IIVKDEKGNKIIEVIKE) (removed in mature form).

The protein belongs to the [NiFe]/[NiFeSe] hydrogenase large subunit family. As to quaternary structure, the F420-non-reducing hydrogenase vhu is composed of four subunits; VhuA, VhuD, VhuG and VhuU. Ni(2+) is required as a cofactor.

This is F420-non-reducing hydrogenase vhu subunit U (vhuU) from Methanocaldococcus jannaschii (strain ATCC 43067 / DSM 2661 / JAL-1 / JCM 10045 / NBRC 100440) (Methanococcus jannaschii).